Reading from the N-terminus, the 439-residue chain is Vacuolar protein sorting-associated protein 4 (439 aa).

Residues 8–75 form the MIT domain; that stretch reads LSKGIDLVQK…TRAEQLKDHL (68 aa). Positions 76–113 are disordered; that stretch reads EKQAQNKSTAESSVNGSTKAKKSNGDGNGSGDDNDDAD. Positions 80 to 93 are enriched in polar residues; the sequence is QNKSTAESSVNGST. 175–182 contributes to the ATP binding site; that stretch reads GPPGTGKS.

This sequence belongs to the AAA ATPase family. Monomer or homodimer (in nucleotide-free form). Decamer, dodecamer or tetradecamer of two stacked respective homooligomeric rings (when bound to ATP); the dodecameric form seems to be predominant.

Its subcellular location is the endosome membrane. Its function is as follows. Pre-vacuolar protein sorting protein involved in the transport of biosynthetic membrane proteins from the prevacuolar/endosomal compartment to the vacuole. Required for multivesicular body (MVB) protein sorting. Catalyzes the ATP-dependent dissociation of class E VPS proteins from endosomal membranes, such as the disassembly of the ESCRT-III complex. Required for extracellular secretion of the secreted aspartyl proteases SAP2, SAP4, SAP5, and SAP6. Its regulation of the pre-vacuolar secretory pathway is critical for virulence. The protein is Vacuolar protein sorting-associated protein 4 of Candida albicans (strain SC5314 / ATCC MYA-2876) (Yeast).